A 313-amino-acid chain; its full sequence is Biotin synthase (313 aa).

Positions 38–262 constitute a Radical SAM core domain; that stretch reads REVQISTLLS…TMPHARVRLS (225 aa). The [4Fe-4S] cluster site is built by Cys53, Cys57, and Cys60. Residues Cys97, Cys128, Cys188, and Arg260 each contribute to the [2Fe-2S] cluster site.

This sequence belongs to the radical SAM superfamily. Biotin synthase family. In terms of assembly, homodimer. [4Fe-4S] cluster serves as cofactor. The cofactor is [2Fe-2S] cluster.

The enzyme catalyses (4R,5S)-dethiobiotin + (sulfur carrier)-SH + 2 reduced [2Fe-2S]-[ferredoxin] + 2 S-adenosyl-L-methionine = (sulfur carrier)-H + biotin + 2 5'-deoxyadenosine + 2 L-methionine + 2 oxidized [2Fe-2S]-[ferredoxin]. The protein operates within cofactor biosynthesis; biotin biosynthesis; biotin from 7,8-diaminononanoate: step 2/2. Its function is as follows. Catalyzes the conversion of dethiobiotin (DTB) to biotin by the insertion of a sulfur atom into dethiobiotin via a radical-based mechanism. The protein is Biotin synthase of Granulibacter bethesdensis (strain ATCC BAA-1260 / CGDNIH1).